Reading from the N-terminus, the 546-residue chain is Probable protein kinase UbiB (546 aa).

Residues 124 to 502 (DFEIKPLASA…HVRQGQSRYF (379 aa)) enclose the Protein kinase domain. ATP contacts are provided by residues 130 to 138 (LASASIAQV) and Lys-153. Asp-288 serves as the catalytic Proton acceptor. Helical transmembrane passes span 501–521 (YFLG…VSRP) and 522–542 (EWGL…FVGW).

The protein belongs to the ABC1 family. UbiB subfamily.

It is found in the cell inner membrane. It participates in cofactor biosynthesis; ubiquinone biosynthesis [regulation]. Is probably a protein kinase regulator of UbiI activity which is involved in aerobic coenzyme Q (ubiquinone) biosynthesis. The chain is Probable protein kinase UbiB from Shigella boydii serotype 18 (strain CDC 3083-94 / BS512).